A 777-amino-acid chain; its full sequence is Ribosome-releasing factor 2, mitochondrial (777 aa).

The 286-residue stretch at 68–353 (AKIRNIGIMA…AVTMYLPSPE (286 aa)) folds into the tr-type G domain. GTP contacts are provided by residues 77 to 84 (AHIDAGKT), 141 to 145 (DTPGH), and 195 to 198 (NKMD).

The protein belongs to the TRAFAC class translation factor GTPase superfamily. Classic translation factor GTPase family. EF-G/EF-2 subfamily.

Its subcellular location is the mitochondrion. The enzyme catalyses GTP + H2O = GDP + phosphate + H(+). In terms of biological role, mitochondrial GTPase that mediates the disassembly of ribosomes from messenger RNA at the termination of mitochondrial protein biosynthesis. Acts in collaboration with MRRF. GTP hydrolysis follows the ribosome disassembly and probably occurs on the ribosome large subunit. Not involved in the GTP-dependent ribosomal translocation step during translation elongation. The polypeptide is Ribosome-releasing factor 2, mitochondrial (Pongo abelii (Sumatran orangutan)).